Reading from the N-terminus, the 466-residue chain is Ribulose bisphosphate carboxylase large chain (466 aa).

The residue at position 5 (K5) is an N6,N6,N6-trimethyllysine. Residues N114 and T164 each coordinate substrate. The Proton acceptor role is filled by K166. Residue K168 participates in substrate binding. K192, D194, and E195 together coordinate Mg(2+). K192 bears the N6-carboxylysine mark. Catalysis depends on H285, which acts as the Proton acceptor. Substrate-binding residues include R286, H318, and S370.

This sequence belongs to the RuBisCO large chain family. Type I subfamily. As to quaternary structure, heterohexadecamer of 8 large chains and 8 small chains. Requires Mg(2+) as cofactor.

It localises to the plastid. The protein localises to the chloroplast. The catalysed reaction is 2 (2R)-3-phosphoglycerate + 2 H(+) = D-ribulose 1,5-bisphosphate + CO2 + H2O. It catalyses the reaction D-ribulose 1,5-bisphosphate + O2 = 2-phosphoglycolate + (2R)-3-phosphoglycerate + 2 H(+). RuBisCO catalyzes two reactions: the carboxylation of D-ribulose 1,5-bisphosphate, the primary event in carbon dioxide fixation, as well as the oxidative fragmentation of the pentose substrate in the photorespiration process. Both reactions occur simultaneously and in competition at the same active site. The sequence is that of Ribulose bisphosphate carboxylase large chain from Drosera regia (King sundew).